The chain runs to 888 residues: MQDKYNHLDVERSAQTHWNAADAYRVTEDASRKKYYACSMLPYPSGKLHMGHVRNYTINDMLSRYLRMKGYNVLMPMGWDAFGLPAENAALKNGVPPAQWTYDNIAYMKKQMQAMGLAVDWSREIATCDPSYYKWNQWLFLKMLEKGIAYRKTQVVNWDPVDQTVLANEQVIDGKGWRTGATVEKREIPGYYLKITDYAEELLGSVQHKLPGWPERVKLMQENWIGKSEGVRFAFLHDIKDASGALIGDGQMYVFTTRADTIMGVTFCAVAPEHPLAVHAAASNPALAAFVEECKSGGTTEAELATQEKKGQPTGLFVTHPLTGDKVEVWVGNYVLMSYGDGAVMGVPAHDERDFEFAKKYGLPIKQVTDVKGQAYSLDAWADWYGDKQHGIAINSGKYDGLAFKAAVDAIAADLAALGLGEKKTTWRLRDWGVSRQRYWGTPIPIIHCDEHGAVPVPEKDLPVVLPMDCIPDGSGNPLHKHEGFHAGVVCPVCGKPARRETDTMDTFVDSSWYFMRYCDPKNSEAMVAGGADYWMPMDQYIGGIEHAILHLLYARFWTKVMRDLGLVKVDEPFTKLLTQGMVLNHIYSRRTDKGGKEYFWPHDVEHVLDDTGKIAGARLKNAVGDLPVGTAIDYEGVGTMSKSKNNGVDPQDIIEKYGADTARLYTMFTAPPEATLEWNDAGVEGSYRFLRRVWNFGVKLNAMNSGANGADAACAKGLFDKETKALRLEVHTLLKQVDYDYQRMQYNTVVSGGMKLLNALEDFKGEISAASLAALREGFSVLLRCLYPAAPHLTHALWSELGYAAEAGDLLDTPWPEVDASALQQDEIELMLQINGKLRGSVTVPAGADKAVIEAAALASEAFVKQAAGAPAKKVIVVPGRLVNIVV.

Positions 42-52 (PYPSGKLHMGH) match the 'HIGH' region motif. The 'KMSKS' region signature appears at 640-644 (TMSKS). Lysine 643 contributes to the ATP binding site.

Belongs to the class-I aminoacyl-tRNA synthetase family.

Its subcellular location is the cytoplasm. The catalysed reaction is tRNA(Leu) + L-leucine + ATP = L-leucyl-tRNA(Leu) + AMP + diphosphate. The sequence is that of Leucine--tRNA ligase from Polaromonas naphthalenivorans (strain CJ2).